The following is a 312-amino-acid chain: Olfactory receptor 52A1 (312 aa).

The Extracellular segment spans residues 1-27; sequence MSISNITVYMPSVLTLVGIPGLESVQC. An N-linked (GlcNAc...) asparagine glycan is attached at Asn-5. The helical transmembrane segment at 28 to 48 threads the bilayer; the sequence is WIGIPFCAIYLIAMIGNSLLL. Residues 49–56 lie on the Cytoplasmic side of the membrane; it reads SIIKSERS. A helical membrane pass occupies residues 57-77; the sequence is LHEPLYIFLGMLGATDIALAS. Over 78-101 the chain is Extracellular; it reads SIMPKMLGIFWFNVPEIYFDSCLL. Cys-99 and Cys-182 form a disulfide bridge. Residues 102-122 traverse the membrane as a helical segment; sequence QMWFIHTLQGIESGILVAMAL. Residues 123-141 are Cytoplasmic-facing; that stretch reads DRYVAICYPLRHANIFTHQ. The chain crosses the membrane as a helical span at residues 142–162; the sequence is LVIQIGTMVVLRAAILVAPCL. Topologically, residues 163–199 are extracellular; that stretch reads VLIKCRFQFYHTTVISHSYCEHMAIVKLAAANVQVNK. Residues 200–220 form a helical membrane-spanning segment; the sequence is IYGLFVAFTVAGFDLTFITLS. Topologically, residues 221 to 240 are cytoplasmic; the sequence is YIQIFITVFRLPQKEARFKA. A helical membrane pass occupies residues 241-261; that stretch reads FNTCIAHICVFLQFYLLAFFS. Topologically, residues 262 to 276 are extracellular; the sequence is FFTHRFGSHISPYIH. Residues 277–297 traverse the membrane as a helical segment; it reads ILFSSIYLLVPPFLNPLVYGA. Residues 298 to 312 are Cytoplasmic-facing; sequence KTTQIRIHVVKMFCS.

The protein belongs to the G-protein coupled receptor 1 family.

It localises to the cell membrane. Odorant receptor. The chain is Olfactory receptor 52A1 (OR52A1) from Homo sapiens (Human).